The following is a 118-amino-acid chain: NADH-quinone oxidoreductase subunit A 1 (118 aa).

Transmembrane regions (helical) follow at residues M1–A21, F60–W80, and L87–I107.

The protein belongs to the complex I subunit 3 family. As to quaternary structure, NDH-1 is composed of 14 different subunits. Subunits NuoA, H, J, K, L, M, N constitute the membrane sector of the complex.

It localises to the cell inner membrane. The enzyme catalyses a quinone + NADH + 5 H(+)(in) = a quinol + NAD(+) + 4 H(+)(out). Its function is as follows. NDH-1 shuttles electrons from NADH, via FMN and iron-sulfur (Fe-S) centers, to quinones in the respiratory chain. The immediate electron acceptor for the enzyme in this species is believed to be ubiquinone. Couples the redox reaction to proton translocation (for every two electrons transferred, four hydrogen ions are translocated across the cytoplasmic membrane), and thus conserves the redox energy in a proton gradient. The sequence is that of NADH-quinone oxidoreductase subunit A 1 from Geobacter sulfurreducens (strain ATCC 51573 / DSM 12127 / PCA).